Reading from the N-terminus, the 357-residue chain is 3-isopropylmalate dehydrogenase (357 aa).

Position 76–89 (76–89) interacts with NAD(+); that stretch reads GPQWDTIDPALRPE. Arginine 96, arginine 106, arginine 134, and aspartate 224 together coordinate substrate. Residues aspartate 224, aspartate 248, and aspartate 252 each coordinate Mg(2+). Residue 282–294 participates in NAD(+) binding; that stretch reads GSAPDIAGKGIAN.

Belongs to the isocitrate and isopropylmalate dehydrogenases family. LeuB type 1 subfamily. In terms of assembly, homodimer. It depends on Mg(2+) as a cofactor. Mn(2+) serves as cofactor.

The protein resides in the cytoplasm. It catalyses the reaction (2R,3S)-3-isopropylmalate + NAD(+) = 4-methyl-2-oxopentanoate + CO2 + NADH. It functions in the pathway amino-acid biosynthesis; L-leucine biosynthesis; L-leucine from 3-methyl-2-oxobutanoate: step 3/4. Catalyzes the oxidation of 3-carboxy-2-hydroxy-4-methylpentanoate (3-isopropylmalate) to 3-carboxy-4-methyl-2-oxopentanoate. The product decarboxylates to 4-methyl-2 oxopentanoate. The polypeptide is 3-isopropylmalate dehydrogenase (Xanthomonas axonopodis pv. citri (strain 306)).